We begin with the raw amino-acid sequence, 289 residues long: Iron-sulfur cluster carrier protein (289 aa).

Residues methionine 1–cysteine 18 show a composition bias toward low complexity. The tract at residues methionine 1–aspartate 20 is disordered. Residue glycine 48–serine 55 participates in ATP binding.

Belongs to the Mrp/NBP35 ATP-binding proteins family. In terms of assembly, homodimer.

Functionally, binds and transfers iron-sulfur (Fe-S) clusters to target apoproteins. Can hydrolyze ATP. The polypeptide is Iron-sulfur cluster carrier protein (Methanococcus maripaludis (strain DSM 14266 / JCM 13030 / NBRC 101832 / S2 / LL)).